The primary structure comprises 1031 residues: Exportin-T (1031 aa).

This sequence belongs to the exportin family.

It is found in the nucleus. The protein localises to the cytoplasm. In terms of biological role, tRNA nucleus export receptor which facilitates tRNA translocation across the nuclear pore complex. Involved in pre-tRNA splicing, probably by affecting the interaction of pre-tRNA with splicing endonuclease. The polypeptide is Exportin-T (los1) (Emericella nidulans (strain FGSC A4 / ATCC 38163 / CBS 112.46 / NRRL 194 / M139) (Aspergillus nidulans)).